Here is a 488-residue protein sequence, read N- to C-terminus: MGADAAIGQIKDAKKRYAAGVLKYAQMGYWDGDYQPKDTDILALFRVTPQDGVDPVEAAAAVAGESSTATWTVVWTDRLTAADMYRAKAYKVEPVPGQPGQYFCWVAYELDLFEEGSIANLTASIIGNVFSFKPLKACRLEDMRLPVAYVKTFRGPPTGIVVERERLDKFGRPLLGATTKPKLGLSGKNYGRVVYEGLKGGLDFVKDDENINSQPFMHWRDRFLYCMEAVNKAQAETGEVKGHYLNITAGTMEEMYRRADFAKELGSVVVMVDLIVGWTAIQSISNWCRENDMLLHMHRAGHGTYTRQKGHGISFRVIAKWLRLAGVDHLHTGTAVGKLEGDPMTVQGYYNVCREDVTRTDYTRGIFFDQDWAGLRKVMPVASGGIHAGQMHQLIDLFGEDVVLQFGGGTIGHPDGIQAGAIANRVALETMILARNEGRDIKNEGPEILVEAAKWCQPLRAALDTWGEVTFNYASTDTSDFVPTASVA.

Residues N128 and T178 each coordinate substrate. The active-site Proton acceptor is K180. Substrate is bound at residue K182. Residues K206, D208, and E209 each coordinate Mg(2+). The residue at position 206 (K206) is an N6-carboxylysine. H298 functions as the Proton acceptor in the catalytic mechanism. Substrate-binding residues include R299, H331, and S383.

The protein belongs to the RuBisCO large chain family. Type I subfamily. As to quaternary structure, heterohexadecamer of 8 large chains and 8 small chains. Requires Mg(2+) as cofactor.

It catalyses the reaction 2 (2R)-3-phosphoglycerate + 2 H(+) = D-ribulose 1,5-bisphosphate + CO2 + H2O. The enzyme catalyses D-ribulose 1,5-bisphosphate + O2 = 2-phosphoglycolate + (2R)-3-phosphoglycerate + 2 H(+). Functionally, ruBisCO catalyzes two reactions: the carboxylation of D-ribulose 1,5-bisphosphate, the primary event in carbon dioxide fixation, as well as the oxidative fragmentation of the pentose substrate. Both reactions occur simultaneously and in competition at the same active site. In Xanthobacter flavus, this protein is Ribulose bisphosphate carboxylase large chain.